The sequence spans 165 residues: Probable DNA polymerase III subunit chi (165 aa).

It belongs to the DNA polymerase III chi/HolC chain family. As to quaternary structure, DNA polymerase III contains a core (composed of alpha, epsilon and theta chains) that associates with a tau subunit. This core dimerizes to form the POLIII' complex. PolIII' associates with the gamma complex (composed of gamma, delta, delta', psi and chi chains) and with the beta chain to form the complete DNA polymerase III complex. Interacts directly with the psi subunit (holD). The only subunit of the DNA polymerase III holoenzyme known to interact with single-stranded DNA binding protein (SSB).

It carries out the reaction DNA(n) + a 2'-deoxyribonucleoside 5'-triphosphate = DNA(n+1) + diphosphate. Its function is as follows. Part of the beta sliding clamp loading complex, which hydrolyzes ATP to load the beta clamp onto primed DNA to form the DNA replication pre-initiation complex. DNA polymerase III is a complex, multichain enzyme responsible for most of the replicative synthesis in bacteria. This DNA polymerase also exhibits 3' to 5' exonuclease activity. The protein is Probable DNA polymerase III subunit chi of Rickettsia prowazekii (strain Madrid E).